The following is a 401-amino-acid chain: MLRWITAGESHGRALVAVVEGMVAGVHVTSADIADQLARRRLGYGRGARMTFERDAVTVLSGIRHGSTLGGPIAIEIGNTEWPKWETVMAADPVDPAELADVARNAPLTRPRPGHADYAGMLKYGFDDARPVLERASARETAARVAAGTVARAFLRQALGVEVLSHVISIGASAPYEGPPPRAEDLPAIDASPVRAYDKAAEADMIAQIEAAKKDGDTLGGVVEAVALGLPVGLGSFTSGDHRLDSQLAAAVMGIQAIKGVEIGDGFQTARRRGSRAHDEMYPGPDGVVRSTNRAGGLEGGMTNGQPLRVRAAMKPISTVPRALATVDLATGDEAVAIHQRSDVCAVPAAGVVVETMVALVLARAALEKFGGDSLAETQRNIAAYQRSVADREAPAARVSG.

NADP(+) is bound by residues Arg-40 and Arg-46. FMN is bound by residues 135–137 (RAS), 256–257 (QA), Gly-300, 315–319 (KPIST), and Arg-341.

This sequence belongs to the chorismate synthase family. As to quaternary structure, homotetramer. The cofactor is FMNH2.

The enzyme catalyses 5-O-(1-carboxyvinyl)-3-phosphoshikimate = chorismate + phosphate. Its pathway is metabolic intermediate biosynthesis; chorismate biosynthesis; chorismate from D-erythrose 4-phosphate and phosphoenolpyruvate: step 7/7. Catalyzes the anti-1,4-elimination of the C-3 phosphate and the C-6 proR hydrogen from 5-enolpyruvylshikimate-3-phosphate (EPSP) to yield chorismate, which is the branch point compound that serves as the starting substrate for the three terminal pathways of aromatic amino acid biosynthesis. This reaction introduces a second double bond into the aromatic ring system. The sequence is that of Chorismate synthase from Mycobacterium bovis (strain BCG / Pasteur 1173P2).